Here is a 308-residue protein sequence, read N- to C-terminus: Testis-expressed protein 52 (308 aa).

As to expression, expressed in Testis.

The polypeptide is Testis-expressed protein 52 (Mus musculus (Mouse)).